The following is a 1483-amino-acid chain: MSENNSHNLDEHESHSENSDYMMDTQVEDDYDEDGHVQGEYSYYPDEDEDEHMLSSVGSFEADDGEDDDNDYHHEDDSGLLYGYHRTQNGSDEDRNEEEDGLERSHDNNEFGSNPLHLPDILETFAQRLEQRRQTSEGLGQHPVGRTLPEILSMIGGRMERSAESSARNERISKLIENTGNASEDPYIAMESLKELSENILMMNQMVVDRIIPMETLIGNIAAILSDKILREELELQMQACRCMYNLFEVCPESISIAVDEHVIPILQGKLVEISYIDLAEQVLETVEYISRVHGRDILKTGQLSIYVQFFDFLTIHAQRKAIAIVSNACSSIRTDDFKTIVEVLPTLKPIFSNATDQPILTRLVNAMYGICGALHGVDKFETLFSLDLIERIVQLVSIQDTPLENKLKCLDILTVLAMSSDVLSRELREKTDIVDMATRSFQHYSKSPNAGLHETLIYVPNSLLISISRFIVVLFPPEDERILSADKYTGNSDRGVISNQEKFDSLVQCLIPILVEIYTNAADFDVRRYVLIALLRVVSCINNSTAKAINDQLIKLIGSILAQKETASNANGTYSSEAGTLLVGGLSLLDLICKKFSELFFPSIKREGIFDLVKDLSVDFNNIDLKEDGNENISLSDEEGDLHSSIEECDEGDEEYDYEFTDMEIPDSVKPKKISIHIFRTLSLAYIKNKGVNLVNRVLSQMNVEQEAITEELHQIEGVVSILENPSTPDKTEEDWKGIWSVLKKCIFHEDFDVSGFEFTSTGLASSITKRITSSTVSHFILAKSFLEVFEDCIDRFLEILQSALTRLENFSIVDCGLHDGGGVSSLAKEIKIKLVYDGDASKDNIGTDLSSTIVSVHCIASFTSLNEFLRHRMVRMRFLNSLIPNLTSSSTEADREEEENCLDHMRKKNFDFFYDNEKVDMESTVFGVIFNTFVRRNRDLKTLWDDTHTIKFCKSLEGNNRESEAAEEANEGKKLRDFYKKREFAQVDTGSSADILTLLDFLHSCGVKSDSFINSKLSAKLARQLDEPLVVASGALPDWSLFLTRRFPFLFPFDTRMLFLQCTSFGYGRLIQLWKNKSKGSKDLRNDEALQQLGRITRRKLRISRKTIFATGLKILSKYGSSPDVLEIEYQEEAGTGLGPTLEFYSVVSKYFARKSLNMWRCNSYSYRSEMDVDTTDDYITTLLFPEPLNPFSNNEKVIELFGYLGTFVARSLLDNRILDFRFSKVFFELLHRMSTPNVTTVPSDVETCLLMIELVDPLLAKSLKYIVANKDDNMTLESLSLTFTVPGNDDIELIPGGCNKSLNSSNVEEYIHGVIDQILGKGIEKQLKAFIEGFSKVFSYERMLILFPDELVDIFGRVEEDWSMATLYTNLNAEHGYTMDSSIIHDFISIISAFGKHERRLFLQFLTGSPKLPIGGFKSLNPKFTVVLKHAEDGLTADEYLPSVMTCANYLKLPKYTSKDIMRSRLCQAIEEGAGAFLLS.

A disordered region spans residues 1–117 (MSENNSHNLD…NNEFGSNPLH (117 aa)). A compositionally biased stretch (basic and acidic residues) spans 8–18 (NLDEHESHSEN). The span at 61 to 70 (EADDGEDDDN) shows a compositional bias: acidic residues. The residue at position 87 (Thr87) is a Phosphothreonine. Residue Lys349 forms a Glycyl lysine isopeptide (Lys-Gly) (interchain with G-Cter in ubiquitin) linkage. The tract at residues 1007 to 1081 (CGVKSDSFIN…LIQLWKNKSK (75 aa)) is K-box. Positions 1376 to 1483 (AEHGYTMDSS…EEGAGAFLLS (108 aa)) constitute an HECT domain. Residue Cys1450 is the Glycyl thioester intermediate of the active site.

Belongs to the UPL family. K-HECT subfamily.

The enzyme catalyses S-ubiquitinyl-[E2 ubiquitin-conjugating enzyme]-L-cysteine + [acceptor protein]-L-lysine = [E2 ubiquitin-conjugating enzyme]-L-cysteine + N(6)-ubiquitinyl-[acceptor protein]-L-lysine.. In terms of biological role, E3 ubiquitin-protein ligase which accepts ubiquitin from an E2 ubiquitin-conjugating enzyme in the form of a thioester and then directly transfers the ubiquitin to targeted substrates. In Saccharomyces cerevisiae (strain ATCC 204508 / S288c) (Baker's yeast), this protein is Ubiquitin fusion degradation protein 4 (UFD4).